The following is a 413-amino-acid chain: Serine hydroxymethyltransferase (413 aa).

Residues Leu-118 and Gly-122–Leu-124 each bind (6S)-5,6,7,8-tetrahydrofolate. An N6-(pyridoxal phosphate)lysine modification is found at Lys-228.

This sequence belongs to the SHMT family. Homodimer. It depends on pyridoxal 5'-phosphate as a cofactor.

The protein localises to the cytoplasm. It carries out the reaction (6R)-5,10-methylene-5,6,7,8-tetrahydrofolate + glycine + H2O = (6S)-5,6,7,8-tetrahydrofolate + L-serine. The protein operates within one-carbon metabolism; tetrahydrofolate interconversion. Its pathway is amino-acid biosynthesis; glycine biosynthesis; glycine from L-serine: step 1/1. In terms of biological role, catalyzes the reversible interconversion of serine and glycine with tetrahydrofolate (THF) serving as the one-carbon carrier. This reaction serves as the major source of one-carbon groups required for the biosynthesis of purines, thymidylate, methionine, and other important biomolecules. Also exhibits THF-independent aldolase activity toward beta-hydroxyamino acids, producing glycine and aldehydes, via a retro-aldol mechanism. The sequence is that of Serine hydroxymethyltransferase from Phytoplasma australiense.